The following is a 454-amino-acid chain: UDP-N-acetylmuramoylalanine--D-glutamate ligase (454 aa).

Gly-116–Ser-122 serves as a coordination point for ATP.

It belongs to the MurCDEF family.

It localises to the cytoplasm. It catalyses the reaction UDP-N-acetyl-alpha-D-muramoyl-L-alanine + D-glutamate + ATP = UDP-N-acetyl-alpha-D-muramoyl-L-alanyl-D-glutamate + ADP + phosphate + H(+). It participates in cell wall biogenesis; peptidoglycan biosynthesis. Functionally, cell wall formation. Catalyzes the addition of glutamate to the nucleotide precursor UDP-N-acetylmuramoyl-L-alanine (UMA). In Lachnoclostridium phytofermentans (strain ATCC 700394 / DSM 18823 / ISDg) (Clostridium phytofermentans), this protein is UDP-N-acetylmuramoylalanine--D-glutamate ligase.